We begin with the raw amino-acid sequence, 209 residues long: Glycolipid transfer protein A (209 aa).

Tandem repeats lie at residues 45–55 (IKADITGNITK) and 56–66 (IRSVYESNPTK). Residues 45-66 (IKADITGNITKIRSVYESNPTK) form a 2 X 12 AA approximate tandem repeats region. 48 to 55 (DITGNITK) is a beta-D-galactosyl-(1-&gt;4)-beta-D-glucosyl-(1&lt;-&gt;1)-N-[(9Z)-octadecenoyl]-sphing-4-enine binding site. Positions 140 and 207 each coordinate beta-D-galactosyl-(1-&gt;4)-beta-D-glucosyl-(1&lt;-&gt;1)-N-[(9Z)-octadecenoyl]-sphing-4-enine.

Belongs to the GLTP family.

It localises to the cytoplasm. Accelerates the intermembrane transfer of various glycolipids. Catalyzes the transfer of various glycosphingolipids between membranes but does not catalyze the transfer of phospholipids. May be involved in the intracellular translocation of glucosylceramides. This is Glycolipid transfer protein A (gltp-a) from Xenopus laevis (African clawed frog).